A 278-amino-acid chain; its full sequence is 3-methyl-2-oxobutanoate hydroxymethyltransferase 1 (278 aa).

2 residues coordinate Mg(2+): Asp-49 and Asp-88. 3-methyl-2-oxobutanoate contacts are provided by residues 49-50 (DS), Asp-88, and Lys-118. Residue Glu-120 participates in Mg(2+) binding. Glu-187 acts as the Proton acceptor in catalysis.

Belongs to the PanB family. In terms of assembly, homodecamer; pentamer of dimers. The cofactor is Mg(2+).

Its subcellular location is the cytoplasm. The enzyme catalyses 3-methyl-2-oxobutanoate + (6R)-5,10-methylene-5,6,7,8-tetrahydrofolate + H2O = 2-dehydropantoate + (6S)-5,6,7,8-tetrahydrofolate. It functions in the pathway cofactor biosynthesis; (R)-pantothenate biosynthesis; (R)-pantoate from 3-methyl-2-oxobutanoate: step 1/2. In terms of biological role, catalyzes the reversible reaction in which hydroxymethyl group from 5,10-methylenetetrahydrofolate is transferred onto alpha-ketoisovalerate to form ketopantoate. The protein is 3-methyl-2-oxobutanoate hydroxymethyltransferase 1 of Hahella chejuensis (strain KCTC 2396).